A 488-amino-acid polypeptide reads, in one-letter code: 3-octaprenyl-4-hydroxybenzoate carboxy-lyase (488 aa).

Residue Asn172 coordinates Mn(2+). Prenylated FMN contacts are provided by residues 175–177 (IYR), 189–191 (RWL), and 194–195 (RG). Glu238 provides a ligand contact to Mn(2+). Catalysis depends on Asp287, which acts as the Proton donor.

The protein belongs to the UbiD family. In terms of assembly, homohexamer. The cofactor is prenylated FMN. It depends on Mn(2+) as a cofactor.

It is found in the cell membrane. The enzyme catalyses a 4-hydroxy-3-(all-trans-polyprenyl)benzoate + H(+) = a 2-(all-trans-polyprenyl)phenol + CO2. It participates in cofactor biosynthesis; ubiquinone biosynthesis. Its function is as follows. Catalyzes the decarboxylation of 3-octaprenyl-4-hydroxy benzoate to 2-octaprenylphenol, an intermediate step in ubiquinone biosynthesis. The protein is 3-octaprenyl-4-hydroxybenzoate carboxy-lyase of Pseudomonas savastanoi pv. phaseolicola (strain 1448A / Race 6) (Pseudomonas syringae pv. phaseolicola (strain 1448A / Race 6)).